The sequence spans 87 residues: Small ribosomal subunit protein bS20 (87 aa).

The disordered stretch occupies residues 1–27; sequence MANIKSAKKRAVQSEKRRKHNASRRSM.

This sequence belongs to the bacterial ribosomal protein bS20 family.

In terms of biological role, binds directly to 16S ribosomal RNA. In Pectobacterium carotovorum subsp. carotovorum (strain PC1), this protein is Small ribosomal subunit protein bS20.